The following is a 586-amino-acid chain: Protein BONZAI 2 (586 aa).

A lipid anchor (N-myristoyl glycine) is attached at G2. 2 C2 domains span residues 25–164 and 176–303; these read SAAT…ALEL and PQHN…NLAL. Residues D62, D68, D121, and D123 each contribute to the Ca(2+) site. In terms of domain architecture, VWFA spans 344 to 563; sequence NFMVAIDFTA…SVVEALLAEL (220 aa).

This sequence belongs to the copine family. Interacts with BAP1 and BAP2. Requires Ca(2+) as cofactor. Expressed in roots, leaves and stems. Expressed in young growing tissues.

It localises to the cell membrane. Functionally, negative regulator of cell death and defense responses. May repress a number of R genes and may have effects in promoting growth and development. May function in membrane trafficking and in fusion of vesicles with plasma membrane. The chain is Protein BONZAI 2 (BON2) from Arabidopsis thaliana (Mouse-ear cress).